The chain runs to 231 residues: Large ribosomal subunit protein uL1 (231 aa).

This sequence belongs to the universal ribosomal protein uL1 family. Part of the 50S ribosomal subunit.

In terms of biological role, binds directly to 23S rRNA. The L1 stalk is quite mobile in the ribosome, and is involved in E site tRNA release. Its function is as follows. Protein L1 is also a translational repressor protein, it controls the translation of the L11 operon by binding to its mRNA. The polypeptide is Large ribosomal subunit protein uL1 (Legionella pneumophila (strain Paris)).